Here is a 378-residue protein sequence, read N- to C-terminus: Tafazzin (378 aa).

Residues 1–137 lie on the Mitochondrial intermembrane side of the membrane; it reads MFMVVCSNLR…RLRNPSKFWY (137 aa). Residues 46–112 are disordered; the sequence is APEARPVPDE…DQDADPSLDV (67 aa). The segment covering 51-67 has biased composition (basic and acidic residues); that stretch reads PVPDERYPGSQQDRKDI. An intramembrane segment occupies 138–158; sequence VVSQFVVSAVGIFSKVVLMFL. The Mitochondrial intermembrane portion of the chain corresponds to 159-378; it reads NKPRVYNRER…ETEKLHRERN (220 aa). Positions 188–193 match the HXXXXD motif motif; sequence HYSCFD.

The protein belongs to the taffazin family. In terms of assembly, associates with multiple protein complexes. Association with large protein complexes occurs only in the presence of cardiolipin.

The protein resides in the mitochondrion outer membrane. It is found in the mitochondrion inner membrane. It localises to the mitochondrion. The protein localises to the mitochondrion membrane. Its subcellular location is the golgi apparatus membrane. The protein resides in the endoplasmic reticulum membrane. The catalysed reaction is 1'-[1,2-diacyl-sn-glycero-3-phospho],3'-[1-acyl-sn-glycero-3-phospho]-glycerol + a 1,2-diacyl-sn-glycero-3-phosphocholine = a cardiolipin + a 1-acyl-sn-glycero-3-phosphocholine. It carries out the reaction 1'-[1,2-di-(9Z,12Z-octadecadienoyl)-sn-glycero-3-phospho]-3'-[1-(9Z,12Z-octadecadienoyl)-sn-glycero-3-phospho]-glycerol + 1-hexadecanoyl-2-(9Z,12Z-octadecadienoyl)-sn-glycero-3-phosphocholine = 1',3'-bis-[1,2-di-(9Z,12Z-octadecadienoyl)-sn-glycero-3-phospho]-glycerol + 1-hexadecanoyl-sn-glycero-3-phosphocholine. The enzyme catalyses 1'-[1,2-di-(9Z,12Z-octadecadienoyl)-sn-glycero-3-phospho]-3'-[2-(9Z,12Z-octadecadienoyl)-sn-glycero-3-phospho]-glycerol + 1-hexadecanoyl-2-(9Z,12Z-octadecadienoyl)-sn-glycero-3-phosphocholine = 1',3'-bis-[1,2-di-(9Z,12Z-octadecadienoyl)-sn-glycero-3-phospho]-glycerol + 1-hexadecanoyl-sn-glycero-3-phosphocholine. It catalyses the reaction 1,2-di-(9Z,12Z-octadecadienoyl)-sn-glycero-3-phosphocholine + 1'-[1,2-di-(9Z,12Z-octadecadienoyl)-sn-glycero-3-phospho]-3'-[1-(9Z,12Z-octadecadienoyl)-sn-glycero-3-phospho]-glycerol = 1-(9Z,12Z)-octadecadienoyl-sn-glycero-3-phosphocholine + 1',3'-bis-[1,2-di-(9Z,12Z-octadecadienoyl)-sn-glycero-3-phospho]-glycerol. The catalysed reaction is 1-tetradecanoyl-sn-glycero-3-phosphocholine + 1',3'-bis-[1,2-di-(9Z,12Z-octadecadienoyl)-sn-glycero-3-phospho]-glycerol = 1-tetradecanoyl-2-(9Z,12Z-octadecadienoyl)-sn-glycero-3-phosphocholine + 1'-[1,2-di-(9Z,12Z-octadecadienoyl)-sn-glycero-3-phospho]-3'-[1-(9Z,12Z-octadecadienoyl)-sn-glycero-3-phospho]-glycerol. It carries out the reaction 1',3'-bis[1,2-di-(9Z-octadecenoyl)-sn-glycero-3-phospho]-glycerol + 1-nonadecanoyl-sn-glycero-3-phosphocholine = 1-nonadecanoyl-2-(9Z-octadecenoyl)-sn-glycero-3-phosphocholine + 1'-[1,2-di-(9Z-octadecenoyl)-sn-glycero-3-phospho]-3'-[1-(9Z-octadecenoyl)-sn-glycero-3-phospho]-glycerol. The enzyme catalyses a 1,2-diacyl-sn-glycero-3-phospho-(1'-sn-glycerol) + a 1-acyl-sn-glycero-3-phosphocholine = 1-acyl-sn-glycero-3-phospho-(1'-sn-glycerol) + a 1,2-diacyl-sn-glycero-3-phosphocholine. It catalyses the reaction 1-hexadecanoyl-2-(9Z,12Z-octadecadienoyl)-sn-glycero-3-phospho-(1'-sn-glycerol) + 1-hexadecanoyl-sn-glycero-3-phosphocholine = 1-hexadecanoyl-sn-glycero-3-phospho-(1'-sn-glycerol) + 1-hexadecanoyl-2-(9Z,12Z-octadecadienoyl)-sn-glycero-3-phosphocholine. The catalysed reaction is 1,2-di-(9Z-octadecenoyl)-sn-glycero-3-phospho-(1'-sn-glycerol) + 1-nonadecanoyl-sn-glycero-3-phosphocholine = 1-nonadecanoyl-2-(9Z-octadecenoyl)-sn-glycero-3-phosphocholine + 1-(9Z-octadecenoyl)-sn-glycero-3-phospho-(1'-sn-glycerol). It carries out the reaction a 1,2-diacyl-sn-glycero-3-phosphate + a 1-acyl-sn-glycero-3-phosphocholine = a 1-acyl-sn-glycero-3-phosphate + a 1,2-diacyl-sn-glycero-3-phosphocholine. The enzyme catalyses 1-hexadecanoyl-2-(9Z,12Z-octadecadienoyl)-sn-glycero-3-phosphate + 1-hexadecanoyl-sn-glycero-3-phosphocholine = 1-hexadecanoyl-2-(9Z,12Z-octadecadienoyl)-sn-glycero-3-phosphocholine + 1-hexadecanoyl-sn-glycero-3-phosphate. It catalyses the reaction 1-hexadecanoyl-2-(9Z,12Z-octadecadienoyl)-sn-glycero-3-phosphocholine + 1-(9Z-octadecenoyl)-sn-glycero-3-phosphate = 1-(9Z)-octadecenoyl-2-(9Z,12Z)-octadecadienoyl-sn-glycero-3-phosphate + 1-hexadecanoyl-sn-glycero-3-phosphocholine. The catalysed reaction is a 1-acyl-sn-glycero-3-phosphocholine + a 1,2-diacyl-sn-glycero-3-phosphoethanolamine = a 1-acyl-sn-glycero-3-phosphoethanolamine + a 1,2-diacyl-sn-glycero-3-phosphocholine. It carries out the reaction 1-hexadecanoyl-2-(9Z,12Z-octadecadienoyl)-sn-glycero-3-phosphoethanolamine + 1-hexadecanoyl-sn-glycero-3-phosphocholine = 1-hexadecanoyl-2-(9Z,12Z-octadecadienoyl)-sn-glycero-3-phosphocholine + 1-hexadecanoyl-sn-glycero-3-phosphoethanolamine. The enzyme catalyses 1,2-di-(9Z,12Z-octadecadienoyl)-sn-glycero-3-phosphoethanolamine + 1-tetradecanoyl-sn-glycero-3-phosphocholine = 1-(9Z,12Z-octadecadienoyl)-sn-glycero-3-phosphoethanolamine + 1-tetradecanoyl-2-(9Z,12Z-octadecadienoyl)-sn-glycero-3-phosphocholine. It catalyses the reaction 1'-[1,2-diacyl-sn-glycero-3-phospho],3'-[1-acyl-sn-glycero-3-phospho]-glycerol + a 1,2-diacyl-sn-glycero-3-phosphoethanolamine = a cardiolipin + a 1-acyl-sn-glycero-3-phosphoethanolamine. The catalysed reaction is 1-hexadecanoyl-2-(9Z,12Z-octadecadienoyl)-sn-glycero-3-phosphoethanolamine + 1'-[1,2-di-(9Z,12Z-octadecadienoyl)-sn-glycero-3-phospho]-3'-[1-(9Z,12Z-octadecadienoyl)-sn-glycero-3-phospho]-glycerol = 1',3'-bis-[1,2-di-(9Z,12Z-octadecadienoyl)-sn-glycero-3-phospho]-glycerol + 1-hexadecanoyl-sn-glycero-3-phosphoethanolamine. It carries out the reaction 1'-[1-(9Z,12Z-octadecadienoyl)-2-(9Z-octadecenoyl)-sn-glycero-3-phospho]-3'-[1-(9Z,12Z-octadecadienoyl)-sn-glycero-3-phospho]-glycerol + 1',3'-bis-[1,2-di-(9Z,12Z-octadecadienoyl)-sn-glycero-3-phospho]-glycerol = 1'-[1,2-di-(9Z,12Z-octadecadienoyl)-sn-glycero-3-phospho]-3'-[1-(9Z,12Z-octadecadienoyl)-2-(9Z-octadecenoyl)-sn-glycero-3-phospho]-glycerol + 1'-[1,2-di-(9Z,12Z-octadecadienoyl)-sn-glycero-3-phospho]-3'-[1-(9Z,12Z-octadecadienoyl)-sn-glycero-3-phospho]-glycerol. The enzyme catalyses 1,2-di-(9Z-hexadecenoyl)-sn-glycero-3-phosphocholine + 1-hexadecanoyl-sn-glycero-3-phosphocholine = 1-hexadecanoyl-2-(9Z-hexadecenoyl)-sn-glycero-3-phosphocholine + 1-(9Z-hexadecenoyl)-sn-glycero-3-phosphocholine. It catalyses the reaction 1,2-dioctadecanoyl-sn-glycero-3-phosphocholine + 1-hexadecanoyl-sn-glycero-3-phosphocholine = 1-hexadecanoyl-2-octadecanoyl-sn-glycero-3-phosphocholine + 1-octadecanoyl-sn-glycero-3-phosphocholine. The catalysed reaction is 1,2-di-(9Z-octadecenoyl)-sn-glycero-3-phosphocholine + 1-hexadecanoyl-sn-glycero-3-phosphocholine = 1-hexadecanoyl-2-(9Z-octadecenoyl)-sn-glycero-3-phosphocholine + 1-(9Z-octadecenoyl)-sn-glycero-3-phosphocholine. It carries out the reaction 1,2-di-(9Z,12Z-octadecadienoyl)-sn-glycero-3-phosphocholine + 1-(9Z-octadecenoyl)-sn-glycero-3-phosphocholine = 1-(9Z)-octadecenoyl-2-(9Z,12Z)-octadecadienoyl-sn-glycero-3-phosphocholine + 1-(9Z,12Z)-octadecadienoyl-sn-glycero-3-phosphocholine. The enzyme catalyses 1,2-di-(9Z,12Z,15Z-octadecatrienoyl)-sn-glycero-3-phosphocholine + 1-tetradecanoyl-sn-glycero-3-phosphocholine = 1-tetradecanoyl-2-(9Z,12Z,15Z-octadecatrienoyl)-sn-glycero-3-phosphocholine + 1-(9Z,12Z,15Z-octadecatrienoyl)-sn-glycero-3-phosphocholine. It catalyses the reaction 1-nonadecanoyl-sn-glycero-3-phosphocholine + 1-octadecanoyl-2-(9Z-octadecenoyl)-sn-glycero-3-phosphocholine = 1-nonadecanoyl-2-(9Z-octadecenoyl)-sn-glycero-3-phosphocholine + 1-octadecanoyl-sn-glycero-3-phosphocholine. The catalysed reaction is 1-(9Z)-octadecenoyl-2-octadecanoyl-sn-glycero-3-phosphocholine + 1-nonadecanoyl-sn-glycero-3-phosphocholine = 2-octadecanoyl-sn-glycero-3-phosphocholine + 1-nonadecanoyl-2-(9Z-octadecenoyl)-sn-glycero-3-phosphocholine. It participates in phospholipid metabolism. In terms of biological role, acyltransferase required to remodel newly synthesized phospholipid cardiolipin (1',3'-bis-[1,2-diacyl-sn-glycero-3-phospho]-glycerol or CL), a key component of the mitochondrial inner membrane, with tissue specific acyl chains necessary for adequate mitochondrial function. Its role in cellular physiology is to improve mitochondrial performance. CL is critical for the coassembly of lipids and proteins in mitochondrial membranes. For instance, remodeling of the acyl groups of CL in the mitochondrial inner membrane affects the assembly and stability of respiratory chain complex IV and its supercomplex forms. Catalyzes the transacylation between phospholipids and lysophospholipids, with the highest rate being between phosphatidylcholine (1,2-diacyl-sn-glycero-3-phosphocholine or PC) and CL. Catalyzes both 1-acyl-sn-glycero-3-phosphocholine (lysophosphatidylcholine or LPC) reacylation and PC-CL transacylation, that means, it exchanges acyl groups between CL and PC by a combination of forward and reverse transacylations. Also catalyzes transacylations between other phospholipids such as phosphatidylethanolamine (1,2-diacyl-sn-glycero-3-phosphoethanolamine or PE) and CL, between PC and PE, and between PC and phosphatidate (1,2-diacyl-sn-glycero-3-phosphate or PA), although at lower rate. Not regiospecific, it transfers acyl groups into any of the sn-1 and sn-2 positions of the monolysocardiolipin (MLCL), which is an important prerequisite for uniformity and symmetry in CL acyl distribution. Cannot transacylate dilysocardiolipin (DLCL), thus, the role of MLCL is limited to that of an acyl acceptor. CoA-independent, it can reshuffle molecular species within a single phospholipid class. Redistributes fatty acids between MLCL, CL, and other lipids, which prolongs the half-life of CL. Its action is completely reversible, which allows for cyclic changes, such as fission and fusion or bending and flattening of the membrane. Hence, by contributing to the flexibility of the lipid composition, it plays an important role in the dynamics of mitochondria membranes. Essential for the final stage of spermatogenesis, spermatid individualization. Required for the initiation of mitophagy. This chain is Tafazzin, found in Drosophila melanogaster (Fruit fly).